The chain runs to 261 residues: Glucosamine-6-phosphate deaminase (261 aa).

D67 (proton acceptor; for enolization step) is an active-site residue. D136 (for ring-opening step) is an active-site residue. H138 serves as the catalytic Proton acceptor; for ring-opening step. E143 serves as the catalytic For ring-opening step.

It belongs to the glucosamine/galactosamine-6-phosphate isomerase family. NagB subfamily.

The enzyme catalyses alpha-D-glucosamine 6-phosphate + H2O = beta-D-fructose 6-phosphate + NH4(+). The protein operates within amino-sugar metabolism; N-acetylneuraminate degradation; D-fructose 6-phosphate from N-acetylneuraminate: step 5/5. Functionally, catalyzes the reversible isomerization-deamination of glucosamine 6-phosphate (GlcN6P) to form fructose 6-phosphate (Fru6P) and ammonium ion. In Beutenbergia cavernae (strain ATCC BAA-8 / DSM 12333 / CCUG 43141 / JCM 11478 / NBRC 16432 / NCIMB 13614 / HKI 0122), this protein is Glucosamine-6-phosphate deaminase.